The primary structure comprises 281 residues: Pantothenate synthetase (281 aa).

Residue 30-37 (MGALHHGH) participates in ATP binding. The Proton donor role is filled by His-37. Gln-61 provides a ligand contact to (R)-pantoate. Residue Gln-61 participates in beta-alanine binding. 147–150 (GEKD) is an ATP binding site. Gln-153 contributes to the (R)-pantoate binding site. Residues Leu-176 and 184-187 (SSSR) each bind ATP.

The protein belongs to the pantothenate synthetase family. Homodimer.

The protein resides in the cytoplasm. It catalyses the reaction (R)-pantoate + beta-alanine + ATP = (R)-pantothenate + AMP + diphosphate + H(+). It functions in the pathway cofactor biosynthesis; (R)-pantothenate biosynthesis; (R)-pantothenate from (R)-pantoate and beta-alanine: step 1/1. Functionally, catalyzes the condensation of pantoate with beta-alanine in an ATP-dependent reaction via a pantoyl-adenylate intermediate. This Bartonella bacilliformis (strain ATCC 35685 / KC583 / Herrer 020/F12,63) protein is Pantothenate synthetase.